Reading from the N-terminus, the 966-residue chain is Mitogen-activated protein kinase kinase kinase 13 (966 aa).

Disordered stretches follow at residues 1–22 and 93–112; these read MANF…SESK and SEMA…STSG. Residues 96–112 show a composition bias toward polar residues; sequence AVSQGNSNTVDAESTSG. Residues 168–409 form the Protein kinase domain; sequence ISELQWLGSG…FRQTLMHLDI (242 aa). ATP-binding positions include 174–182 and K195; that span reads LGSGAQGAV. D279 (proton acceptor) is an active-site residue. Leucine-zipper regions lie at residues 433–454 and 486–507; these read VKKH…DEEL and LSAI…EQAV. 4 disordered regions span residues 534 to 652, 744 to 834, 846 to 873, and 887 to 906; these read KRKG…SQSH, DIPS…RRQR, STFS…PDEL, and DLLS…SDGL. A compositionally biased stretch (low complexity) spans 567 to 581; that stretch reads SPLSGSPKMSTSSSK. A compositionally biased stretch (basic residues) spans 582–594; that stretch reads SRYRSKPRHRRGN. Composition is skewed to polar residues over residues 609 to 629 and 781 to 795; these read QPAQ…SQYP and FSSC…TSHL. The segment covering 814 to 827 has biased composition (acidic residues); it reads DSSEEEEGEVDSEV. Positions 815–828 are acidic; that stretch reads SSEEEEGEVDSEVE. Over residues 846–855 the composition is skewed to polar residues; it reads STFSSENFSV.

It belongs to the protein kinase superfamily. STE Ser/Thr protein kinase family. MAP kinase kinase kinase subfamily. Homodimer; forms dimers through the leucine-zipper motif. Interacts with the C-terminus of MAPK8IP1 through the kinase catalytic domain. Binds PRDX3. Associates with the IKK complex through the kinase domain. Requires Mg(2+) as cofactor. Autophosphorylated on serine and threonine residues.

The protein localises to the cytoplasm. The protein resides in the membrane. It catalyses the reaction L-seryl-[protein] + ATP = O-phospho-L-seryl-[protein] + ADP + H(+). It carries out the reaction L-threonyl-[protein] + ATP = O-phospho-L-threonyl-[protein] + ADP + H(+). With respect to regulation, activated by autophosphorylation and homodimerization. Functionally, activates the JUN N-terminal pathway through activation of the MAP kinase kinase MAP2K7. Acts synergistically with PRDX3 to regulate the activation of NF-kappa-B in the cytosol. This activation is kinase-dependent and involves activating the IKK complex, the IKBKB-containing complex that phosphorylates inhibitors of NF-kappa-B. The sequence is that of Mitogen-activated protein kinase kinase kinase 13 from Pongo abelii (Sumatran orangutan).